We begin with the raw amino-acid sequence, 400 residues long: Large envelope protein (400 aa).

Disordered regions lie at residues 1–50 (MGGW…PHKD) and 84–116 (ILTS…RDTH). Glycine 2 carries the N-myristoyl glycine; by host lipid modification. The segment at 2–119 (GGWSSKPRKG…PPLRDTHPQA (118 aa)) is pre-S1. Positions 2–174 (GGWSSKPRKG…LSTTGDPVPN (173 aa)) are pre-S. Topologically, residues 2 to 181 (GGWSSKPRKG…VPNMENIASG (180 aa)) are virion surface; in external conformation. The Intravirion; in internal conformation portion of the chain corresponds to 2-253 (GGWSSKPRKG…PGYRWMCLRR (252 aa)). Over residues 96-106 (STNRQSGRQPT) the composition is skewed to polar residues. The tract at residues 120–174 (VQWNSTTFHQTLQDPRVRALYLPAGGSSSGTVSPAQNTVSAISSILSTTGDPVPN) is pre-S2. Residues 182–202 (LLGPLLVLQAGFFSLTKILTI) form a helical membrane-spanning segment. Topologically, residues 203–253 (PQSLDSWWTSLNFLGGTPVCLGQNSQSQISSHSPTCCPPICPGYRWMCLRR) are intravirion; in external conformation. A helical membrane pass occupies residues 254 to 274 (FIIFLCILLLCLIFLLVLLDY). Topologically, residues 275 to 348 (QGMLPVCPLI…WASVRFSWLS (74 aa)) are virion surface. The N-linked (GlcNAc...) asparagine; by host glycan is linked to asparagine 320. The helical transmembrane segment at 349-369 (LLVPFVQWFVGLSPTVWLSVI) threads the bilayer. Residues 370–375 (WMMWFW) lie on the Intravirion side of the membrane. Residues 376 to 398 (GPSLYNILSPFMPLLPIFLCLWV) traverse the membrane as a helical segment. Topologically, residues 399-400 (YM) are virion surface.

It belongs to the orthohepadnavirus major surface antigen family. As to quaternary structure, li-HBsAg interacts with capsid protein and with HDV Large delta antigen. Isoform M associates with host chaperone CANX through its pre-S2 N glycan. This association may be essential for M proper secretion. Interacts (via its myristoylated pre-S1 region) with the host SLC10A1/NTCP; this interaction is essential for viral entry. Isoform M is N-terminally acetylated by host at a ratio of 90%, and N-glycosylated by host at the pre-S2 region. Post-translationally, myristoylated; this modification is essential for its interaction with the host protein SLC10A1/NTCP.

Its subcellular location is the virion membrane. In terms of biological role, the large envelope protein exists in two topological conformations, one which is termed 'external' or Le-HBsAg and the other 'internal' or Li-HBsAg. In its external conformation the protein attaches the virus to cell receptors and thereby initiating infection. This interaction determines the species specificity and liver tropism. This attachment induces virion internalization predominantly through caveolin-mediated endocytosis. The large envelope protein also assures fusion between virion membrane and endosomal membrane. In its internal conformation the protein plays a role in virion morphogenesis and mediates the contact with the nucleocapsid like a matrix protein. Functionally, the middle envelope protein plays an important role in the budding of the virion. It is involved in the induction of budding in a nucleocapsid independent way. In this process the majority of envelope proteins bud to form subviral lipoprotein particles of 22 nm of diameter that do not contain a nucleocapsid. This is Large envelope protein from Homo sapiens (Human).